A 197-amino-acid chain; its full sequence is Probable GTP-binding protein EngB (197 aa).

The EngB-type G domain maps to serine 25 to arginine 197. Residues glycine 33 to serine 40, glycine 60 to glutamine 64, aspartate 79 to glycine 82, threonine 146 to aspartate 149, and methionine 177 to isoleucine 179 each bind GTP. Serine 40 and threonine 62 together coordinate Mg(2+).

The protein belongs to the TRAFAC class TrmE-Era-EngA-EngB-Septin-like GTPase superfamily. EngB GTPase family. Mg(2+) serves as cofactor.

Necessary for normal cell division and for the maintenance of normal septation. The chain is Probable GTP-binding protein EngB from Wolbachia pipientis wMel.